The sequence spans 402 residues: Endoglucanase 1 (402 aa).

Gln1 is modified (pyrrolidone carboxylic acid). 3 disulfides stabilise this stretch: Cys18/Cys24, Cys51/Cys73, and Cys63/Cys69. Asn89 carries N-linked (GlcNAc...) asparagine glycosylation. 6 disulfide bridges follow: Cys140-Cys365, Cys172-Cys195, Cys176-Cys194, Cys215-Cys234, Cys223-Cys228, and Cys239-Cys315. Residue Glu197 is the Nucleophile of the active site. Glu202 serves as the catalytic Proton donor. N-linked (GlcNAc...) asparagine glycosylation occurs at Asn247.

Belongs to the glycosyl hydrolase 7 (cellulase C) family. In terms of assembly, monomer.

It localises to the secreted. It carries out the reaction Endohydrolysis of (1-&gt;4)-beta-D-glucosidic linkages in cellulose, lichenin and cereal beta-D-glucans.. Its function is as follows. The biological conversion of cellulose to glucose generally requires three types of hydrolytic enzymes: (1) Endoglucanases which cut internal beta-1,4-glucosidic bonds; (2) Exocellobiohydrolases that cut the disaccharide cellobiose from the non-reducing end of the cellulose polymer chain; (3) Beta-1,4-glucosidases which hydrolyze the cellobiose and other short cello-oligosaccharides to glucose. In Humicola insolens (Soft-rot fungus), this protein is Endoglucanase 1 (CEL7B).